Here is an 88-residue protein sequence, read N- to C-terminus: Carboxysome shell vertex protein CsoS4A (88 aa).

The region spanning 1–76 is the BMV domain; sequence MLICKVLKPL…SDLTIVGIID (76 aa).

Belongs to the CcmL/EutN family. CsoS4 subfamily. In terms of assembly, homopentamer.

The protein localises to the carboxysome. In terms of biological role, probably forms vertices in the carboxysome, a polyhedral inclusion where RuBisCO (ribulose bisphosphate carboxylase, cbbL-cbbS) is sequestered. Has been modeled to induce curvature upon insertion into an otherwise flat hexagonal layer of major carboxysome subunits. Has not been identified in purified carboxysomes; it is expected to be present in very low amounts. The sequence is that of Carboxysome shell vertex protein CsoS4A from Prochlorococcus marinus subsp. pastoris (strain CCMP1986 / NIES-2087 / MED4).